Reading from the N-terminus, the 159-residue chain is MDHNQYLLTMFFADDDSFFKYLASQDDESSLSDILQITQYLDFLLLLLIQSKNKLEAVGHCYESLSEEYRQLTKFTDSQDFKKLFNKVPIVTDGRVKLNKGYLFDFVISLMRFKKESALATTAIDPVRYIDPRRDIAFSNVMDILKSNKAKNNYSLLSS.

The protein belongs to the orthopoxvirus OPG100 family. Homodimer. Part of a complex composed of the kinase OPG054, OPG092, OPG114, OPG115, OPG142 and OPG157. Interacts with OPG175.

It localises to the virion. The protein localises to the host cytoplasm. In terms of biological role, late protein which is a part of a large complex required for early virion morphogenesis. This complex participates in the formation of virosomes and the incorporation of virosomal contents into nascent immature virions. Plays a role in DNA packaging during immature virions (IV) formation. The sequence is that of Virion assembly protein OPG100 (OPG100) from Homo sapiens (Human).